A 372-amino-acid polypeptide reads, in one-letter code: Germination protease (372 aa).

The propeptide occupies 1 to 15; sequence MVKELNLEQYNVRTD.

It belongs to the peptidase A25 family. As to quaternary structure, homotetramer. Post-translationally, autoproteolytically processed. The inactive tetrameric zymogen termed p46 autoprocesses to a smaller form termed p41, which is active only during spore germination.

The enzyme catalyses Endopeptidase action with P4 Glu or Asp, P1 preferably Glu &gt; Asp, P1' hydrophobic and P2' Ala.. Its function is as follows. Initiates the rapid degradation of small, acid-soluble proteins during spore germination. In Halalkalibacterium halodurans (strain ATCC BAA-125 / DSM 18197 / FERM 7344 / JCM 9153 / C-125) (Bacillus halodurans), this protein is Germination protease.